The following is a 393-amino-acid chain: NAD(P)H-quinone oxidoreductase subunit H, chloroplastic (393 aa).

It belongs to the complex I 49 kDa subunit family. NDH is composed of at least 16 different subunits, 5 of which are encoded in the nucleus.

The protein resides in the plastid. It localises to the chloroplast thylakoid membrane. The catalysed reaction is a plastoquinone + NADH + (n+1) H(+)(in) = a plastoquinol + NAD(+) + n H(+)(out). The enzyme catalyses a plastoquinone + NADPH + (n+1) H(+)(in) = a plastoquinol + NADP(+) + n H(+)(out). NDH shuttles electrons from NAD(P)H:plastoquinone, via FMN and iron-sulfur (Fe-S) centers, to quinones in the photosynthetic chain and possibly in a chloroplast respiratory chain. The immediate electron acceptor for the enzyme in this species is believed to be plastoquinone. Couples the redox reaction to proton translocation, and thus conserves the redox energy in a proton gradient. The chain is NAD(P)H-quinone oxidoreductase subunit H, chloroplastic from Carica papaya (Papaya).